An 820-amino-acid polypeptide reads, in one-letter code: MAGELADKKDRDASPSKEERKRSRTPDRERDRDRDRKSSPSKDRKRHRSRDRRRGGSRSRSRSRSKSAERERRHKERERDKERDRNKKDRDRDKDGHRRDKDRKRSSLSPGRGKDFKSRKDRDSKKDEEDEHGDKKPKAQPLSLEELLAKKKAEEEAEAKPKFLSKAEREAEALKRRQQEVEERQRMLEEERKKRKQFQDLGRKMLEDPQERERRERRERMERETNGNEDEEGRQKIREEKDKSKELHAIKERYLGGIKKRRRTRHLNDRKFVFEWDASEDTSIDYNPLYKERHQVQLLGRGFIAGIDLKQQKREQSRFYGDLMEKRRTLEEKEQEEARFRKLRKKEAKQRWDDRHWSQKKLDEMTDRDWRIFREDYSITTKGGKIPNPIRSWKDSSLPPHILEVIDKCGYKEPTPIQRQAIPIGLQNRDIIGVAETGSGKTAAFLIPLLVWITTLPKIDRIEESDQGPYAIILAPTRELAQQIEEETIKFGKPLGIRTVAVIGGISREDQGFRLRMGCEIVIATPGRLIDVLENRYLVPSRCTYVVLDEADRMIDMGFEPDVQKILEHMPVSNQKPDTDEAEDPEKMLANFESGKHKYRQTVMFTATMPPAVERLARSYLRRPAVVYIGSAGKPHERVEQKVFLMSESEKRKKLLAILEQGFDPPIIIFVNQKKGCDVLAKSLEKMGYNACTLHGGKGQEQREFALSNLKAGAKDILVATDVAGRGIDIQDVSMVVNYDMAKNIEDYIHRIGRTGRAGKSGVAITFLTKEDSAVFYELKQAILESPVSSCPPELANHPDAQHKPGTILTKKRREETIFA.

A compositionally biased stretch (basic and acidic residues) spans 1-42 (MAGELADKKDRDASPSKEERKRSRTPDRERDRDRDRKSSPSK). Residues 1 to 244 (MAGELADKKD…QKIREEKDKS (244 aa)) are disordered. A phosphoserine mark is found at Ser14 and Ser16. Residues 43–65 (DRKRHRSRDRRRGGSRSRSRSRS) are compositionally biased toward basic residues. The segment covering 66–105 (KSAERERRHKERERDKERDRNKKDRDRDKDGHRRDKDRKR) has biased composition (basic and acidic residues). Ser107 and Ser109 each carry phosphoserine. Composition is skewed to basic and acidic residues over residues 112 to 137 (RGKDFKSRKDRDSKKDEEDEHGDKKP), 147 to 226 (LLAK…RETN), and 233 to 244 (GRQKIREEKDKS). A Q motif motif is present at residues 391–419 (RSWKDSSLPPHILEVIDKCGYKEPTPIQR). Residues 422–627 (IPIGLQNRDI…RSYLRRPAVV (206 aa)) enclose the Helicase ATP-binding domain. Residue 435-442 (AETGSGKT) participates in ATP binding. A DEAD box motif is present at residues 549–552 (DEAD). The region spanning 651–799 (KRKKLLAILE…SCPPELANHP (149 aa)) is the Helicase C-terminal domain. Glycyl lysine isopeptide (Lys-Gly) (interchain with G-Cter in SUMO2) cross-links involve residues Lys686 and Lys811.

This sequence belongs to the DEAD box helicase family. DDX23/PRP28 subfamily. In terms of assembly, the phosphorylated form (by SRPK2) is a component of the U4/U6-U5 tri-snRNP complex composed of the U4, U6 and U5 snRNAs and at least PRPF3, PRPF4, PRPF6, PRPF8, PRPF31, SNRNP200, TXNL4A, WDR57, SNRNP40, DDX23, CD2BP2, PPIH, SNU13, EFTUD2, SART1 and USP39. Identified in the spliceosome C complex. Interacts with ERBB4. Interacts with ERCC6. Post-translationally, in vitro phosphorylated by CLK1 and U1 snRNP-associated protein kinase. Phosphorylated by SRPK2 and this phosphorylation is required for its association with the tri-snRNP (U4/U6-U5 tri-small nuclear ribonucleoproteins) and subsequent spliceosomal B complex formation. May be phosphorylated by SRPK2 on Ser residues in the SR domain; the phosphorylation is required for the removal of inappropriate R-loops during transcription.

It localises to the nucleus. The protein resides in the chromosome. The enzyme catalyses ATP + H2O = ADP + phosphate + H(+). Involved in pre-mRNA splicing and its phosphorylated form (by SRPK2) is required for spliceosomal B complex formation. Independently of its spliceosome formation function, required for the suppression of incorrect R-loops formed during transcription; R-loops are composed of a DNA:RNA hybrid and the associated non-template single-stranded DNA. In Pongo abelii (Sumatran orangutan), this protein is Probable ATP-dependent RNA helicase DDX23.